The chain runs to 239 residues: Acidic leucine-rich nuclear phosphoprotein 32 family member B (239 aa).

LRR repeat units lie at residues 16–40 (AADA…LTSE), 43–64 (SLEF…PKLP), 65–87 (KLKK…AERT), and 89–110 (NLTH…EPLK). The 43-residue stretch at 123–165 (CEVTMLNNYRESVFELLPKLTFLDGFDADDQEAPDSDPEAEDL) folds into the LRRCT domain. A compositionally biased stretch (acidic residues) spans 149 to 215 (DADDQEAPDS…EEDEDDEDVP (67 aa)). Positions 149 to 239 (DADDQEAPDS…EEEEDDEDDE (91 aa)) are disordered. Basic and acidic residues predominate over residues 216 to 225 (QGEKRKRDLS). The span at 226–239 (DEGEEEEEDDEDDE) shows a compositional bias: acidic residues.

The protein belongs to the ANP32 family.

The protein localises to the nucleus. In terms of biological role, multifunctional protein working as a cell cycle progression factor as well as a cell survival factor. Required for the progression from the G1 to the S phase. Anti-apoptotic protein which functions as a caspase-3 inhibitor. Has no phosphatase 2A (PP2A) inhibitor activity. Exhibits histone chaperone properties, stimulating core histones to assemble into a nucleosome. The chain is Acidic leucine-rich nuclear phosphoprotein 32 family member B (anp32b) from Xenopus laevis (African clawed frog).